Reading from the N-terminus, the 129-residue chain is Aldose 1-epimerase (129 aa).

The protein belongs to the aldose epimerase family.

The enzyme catalyses alpha-D-glucose = beta-D-glucose. It participates in carbohydrate metabolism; hexose metabolism. Functionally, mutarotase converts alpha-aldose to the beta-anomer. It is active on D-glucose, L-arabinose, D-xylose, D-galactose, maltose and lactose. In Lactobacillus helveticus (Lactobacillus suntoryeus), this protein is Aldose 1-epimerase (galM).